Consider the following 330-residue polypeptide: Ribosomal RNA small subunit methyltransferase H (330 aa).

Residues 35-37, D53, F80, D101, and Q108 each bind S-adenosyl-L-methionine; that span reads GGY.

The protein belongs to the methyltransferase superfamily. RsmH family.

Its subcellular location is the cytoplasm. The enzyme catalyses cytidine(1402) in 16S rRNA + S-adenosyl-L-methionine = N(4)-methylcytidine(1402) in 16S rRNA + S-adenosyl-L-homocysteine + H(+). Specifically methylates the N4 position of cytidine in position 1402 (C1402) of 16S rRNA. In Rhodopseudomonas palustris (strain BisB18), this protein is Ribosomal RNA small subunit methyltransferase H.